The following is a 282-amino-acid chain: MMVHAHPDDESIVTGATLAKYAAEGAGVTLVTCTLGEEGEVIPDDLAHLTSDREGTLGEHRIGELDKACLALGVRDHRFLGGPGRYRDSGMMGAPTNEHPRAFWGADVEEAATLLAQVIREVRPHVLVSYDEHGGYGHPDHIQAHRVARRAFLRAGERAMPGTPWQVRKLYAIAQPVSRIEESIARLREESGSFTPPARVSDIARGTPETAVTTRVDATDHWAAKALAMRAHATQITVEGERFALSNDIAQEIDAVEYFTLLVGPTPRIQHGEYETDLFAGL.

Zn(2+)-binding residues include His-6, Asp-9, and His-141.

It belongs to the MshB deacetylase family. Zn(2+) is required as a cofactor.

The enzyme catalyses 1D-myo-inositol 2-acetamido-2-deoxy-alpha-D-glucopyranoside + H2O = 1D-myo-inositol 2-amino-2-deoxy-alpha-D-glucopyranoside + acetate. Its function is as follows. Catalyzes the deacetylation of 1D-myo-inositol 2-acetamido-2-deoxy-alpha-D-glucopyranoside (GlcNAc-Ins) in the mycothiol biosynthesis pathway. The sequence is that of 1D-myo-inositol 2-acetamido-2-deoxy-alpha-D-glucopyranoside deacetylase from Nocardiopsis dassonvillei (strain ATCC 23218 / DSM 43111 / CIP 107115 / JCM 7437 / KCTC 9190 / NBRC 14626 / NCTC 10488 / NRRL B-5397 / IMRU 509) (Actinomadura dassonvillei).